A 213-amino-acid polypeptide reads, in one-letter code: Ribonuclease HII (213 aa).

One can recognise an RNase H type-2 domain in the interval 1–213; it reads MKIIGIDEAG…SWKTAQKFIQ (213 aa). A divalent metal cation-binding residues include D7, E8, and D105.

Belongs to the RNase HII family. Mn(2+) serves as cofactor. It depends on Mg(2+) as a cofactor.

It is found in the cytoplasm. The catalysed reaction is Endonucleolytic cleavage to 5'-phosphomonoester.. Its function is as follows. Endonuclease that specifically degrades the RNA of RNA-DNA hybrids. The sequence is that of Ribonuclease HII from Methanococcoides burtonii (strain DSM 6242 / NBRC 107633 / OCM 468 / ACE-M).